Here is a 716-residue protein sequence, read N- to C-terminus: Phosphoribosylformylglycinamidine synthase subunit PurL (716 aa).

The active site involves histidine 34. ATP is bound at residue tyrosine 37. Glutamate 78 serves as a coordination point for Mg(2+). Substrate-binding positions include 79–82 and arginine 101; that span reads SHNH. The active-site Proton acceptor is histidine 80. Aspartate 102 is a Mg(2+) binding site. Glutamine 226 lines the substrate pocket. Aspartate 254 is a Mg(2+) binding site. Substrate is bound at residue 298-300; that stretch reads ESQ. ATP is bound by residues aspartate 474 and glycine 511. Asparagine 512 is a Mg(2+) binding site. Residue serine 514 participates in substrate binding.

This sequence belongs to the FGAMS family. As to quaternary structure, monomer. Part of the FGAM synthase complex composed of 1 PurL, 1 PurQ and 2 PurS subunits.

The protein resides in the cytoplasm. The enzyme catalyses N(2)-formyl-N(1)-(5-phospho-beta-D-ribosyl)glycinamide + L-glutamine + ATP + H2O = 2-formamido-N(1)-(5-O-phospho-beta-D-ribosyl)acetamidine + L-glutamate + ADP + phosphate + H(+). The protein operates within purine metabolism; IMP biosynthesis via de novo pathway; 5-amino-1-(5-phospho-D-ribosyl)imidazole from N(2)-formyl-N(1)-(5-phospho-D-ribosyl)glycinamide: step 1/2. Its function is as follows. Part of the phosphoribosylformylglycinamidine synthase complex involved in the purines biosynthetic pathway. Catalyzes the ATP-dependent conversion of formylglycinamide ribonucleotide (FGAR) and glutamine to yield formylglycinamidine ribonucleotide (FGAM) and glutamate. The FGAM synthase complex is composed of three subunits. PurQ produces an ammonia molecule by converting glutamine to glutamate. PurL transfers the ammonia molecule to FGAR to form FGAM in an ATP-dependent manner. PurS interacts with PurQ and PurL and is thought to assist in the transfer of the ammonia molecule from PurQ to PurL. The chain is Phosphoribosylformylglycinamidine synthase subunit PurL from Methanobrevibacter smithii (strain ATCC 35061 / DSM 861 / OCM 144 / PS).